We begin with the raw amino-acid sequence, 87 residues long: Apolipoprotein C-I (87 aa).

Residues 1–26 (MRLFLSLPVLVVVLAMVLEGPAPAQA) form the signal peptide.

It belongs to the apolipoprotein C1 family.

The protein resides in the secreted. Inhibitor of lipoprotein binding to the low density lipoprotein (LDL) receptor, LDL receptor-related protein, and very low density lipoprotein (VLDL) receptor. Associates with high density lipoproteins (HDL) and the triacylglycerol-rich lipoproteins in the plasma and makes up about 10% of the protein of the VLDL and 2% of that of HDL. Appears to interfere directly with fatty acid uptake and is also the major plasma inhibitor of cholesteryl ester transfer protein (CETP). Binds free fatty acids and reduces their intracellular esterification. Modulates the interaction of APOE with beta-migrating VLDL and inhibits binding of beta-VLDL to the LDL receptor-related protein. In Zalophus californianus (California sealion), this protein is Apolipoprotein C-I (APOC1).